Consider the following 336-residue polypeptide: Nuclear egress protein 2 (336 aa).

At 1 to 315 (MASPEERLLD…AWRYSWRATP (315 aa)) the chain is on the perinuclear space side. Disordered regions lie at residues 193–221 (RSGQ…GCLG) and 277–297 (RTRE…VPPE). Residues 277–288 (RTRETRRMRGSH) are compositionally biased toward basic residues. A helical transmembrane segment spans residues 316-333 (YLARVLAVTAVALLLMFL). The Nuclear portion of the chain corresponds to 334–336 (RWT).

It belongs to the herpesviridae NEC2 protein family. As to quaternary structure, forms a heterodimeric viral nuclear egress complex (NEC) with NEC1. Interacts with host IKBKE; this interaction inhibits host IKBKE kinase activity and IRF3 nuclear translocation. Post-translationally, phosphorylated.

Its subcellular location is the host nucleus inner membrane. The protein localises to the host cytoplasm. The protein resides in the host perinuclear region. Plays an essential role in virion nuclear egress, the first step of virion release from infected cell. Within the host nucleus, NEC1 interacts with the newly formed capsid through the vertexes and directs it to the inner nuclear membrane by associating with NEC2. Induces the budding of the capsid at the inner nuclear membrane as well as its envelopment into the perinuclear space. There, the NEC1/NEC2 complex promotes the fusion of the enveloped capsid with the outer nuclear membrane and the subsequent release of the viral capsid into the cytoplasm where it will reach the secondary budding sites in the host Golgi or trans-Golgi network. Inhibits host IKBKE and IRF3, thereby impairing type I IFN signaling. The sequence is that of Nuclear egress protein 2 from Homo sapiens (Human).